Reading from the N-terminus, the 651-residue chain is Probable replication restart protein PriA (651 aa).

Positions 371, 374, 380, 383, 399, 402, 411, and 414 each coordinate Zn(2+).

This sequence belongs to the helicase family. PriA subfamily. As to quaternary structure, component of the replication restart primosome. Requires Zn(2+) as cofactor.

Functionally, initiates the restart of stalled replication forks, which reloads the replicative helicase on sites other than the origin of replication. Recognizes and binds to abandoned replication forks and remodels them to uncover a helicase loading site. Promotes assembly of the primosome at these replication forks. The chain is Probable replication restart protein PriA from Mycobacterium leprae (strain TN).